The primary structure comprises 190 residues: MSCSRTVALLAALWLVVGATSSPVRRSPDLEARRRSAIDRSMIRFGRSYPPEPSAADIREAFERPTRRGNSFLRFGRSQPLTLSTDDLVSLLRAYEEDYDTPMTKKSASFVRFGRDPNFIRLGRSADDDKSAFEQNSELVVSGYPQRKSRARDHFIRLGRDSEEVNENEFEETEESRRKRSADSCHDCQS.

Residues 1 to 21 (MSCSRTVALLAALWLVVGATS) form the signal peptide. Residues 22–33 (SPVRRSPDLEAR) constitute a propeptide that is removed on maturation. F45 carries the phenylalanine amide modification. A propeptide spanning residues 69-104 (GNSFLRFGRSQPLTLSTDDLVSLLRAYEEDYDTPMT) is cleaved from the precursor. F113 is subject to Phenylalanine amide. Residues 116 to 150 (DPNFIRLGRSADDDKSAFEQNSELVVSGYPQRKSR) constitute a propeptide that is removed on maturation. L158 bears the Leucine amide mark. The propeptide occupies 160–190 (RDSEEVNENEFEETEESRRKRSADSCHDCQS). The segment at 161 to 190 (DSEEVNENEFEETEESRRKRSADSCHDCQS) is disordered. Residues 164–174 (EVNENEFEETE) show a composition bias toward acidic residues. The segment covering 175 to 190 (ESRRKRSADSCHDCQS) has biased composition (basic and acidic residues).

It belongs to the FARP (FMRFamide related peptide) family. RFamide 1: Expressed in corpora cardiaca (CC), corpora allata (CA), antennal lobe (AL) and gnathal ganglion (GNG) (at protein level). Expression in AL detected in most animals, in CC, CA and in GNG in some animals (at protein level). RFamide precursor-related peptide 2: Expressed in corpora cardiaca (CC), corpora allata (CA), antennal lobe (AL) and gnathal ganglion (GNG) (at protein level). Expression in AL detected in some animals, expression in CC, CA and GNG in few animals (at protein level). RFamide 3: Expressed in corpora cardiaca (CC), corpora allata (CA), antennal lobe (AL) and gnathal ganglion (GNG) (at protein level). Expression in AL detected in all animals, in CC, CA and GNG in most animals (at protein level). RFamide 5: Expressed in corpora cardiaca (CC), corpora allata (CA), antennal lobe (AL) and gnathal ganglion (GNG) (at protein level). Expression in AL detected in all animals, in CC, CA and in GNG in some animals (at protein level).

It is found in the secreted. Functionally, in insects, FMRFamide and related peptides have modulatory actions at skeletal neuromuscular junctions, and peptides that are immunologically related to FMRFamide are released into the circulation from neurohemal organs. The polypeptide is FMRFamide-related peptides (Agrotis ipsilon (Black cutworm moth)).